We begin with the raw amino-acid sequence, 640 residues long: Threonine--tRNA ligase (640 aa).

In terms of domain architecture, TGS spans 1 to 61; that stretch reads MPIITLPNGD…TEDATLQIIT (61 aa). The catalytic stretch occupies residues 242 to 533; sequence DHRKIGKALD…LIEHYAGFMP (292 aa). Residues cysteine 333, histidine 384, and histidine 510 each coordinate Zn(2+).

It belongs to the class-II aminoacyl-tRNA synthetase family. In terms of assembly, homodimer. The cofactor is Zn(2+).

It localises to the cytoplasm. It carries out the reaction tRNA(Thr) + L-threonine + ATP = L-threonyl-tRNA(Thr) + AMP + diphosphate + H(+). Catalyzes the attachment of threonine to tRNA(Thr) in a two-step reaction: L-threonine is first activated by ATP to form Thr-AMP and then transferred to the acceptor end of tRNA(Thr). Also edits incorrectly charged L-seryl-tRNA(Thr). The protein is Threonine--tRNA ligase of Acinetobacter baylyi (strain ATCC 33305 / BD413 / ADP1).